The chain runs to 581 residues: Prolactin receptor (581 aa).

Residues 1 to 24 (MKENAASRVLFILLLFLFASLLNG) form the signal peptide. Residues 25 to 237 (QSPPEKPKLI…NDFPVKDTSM (213 aa)) are Extracellular-facing. 2 consecutive Fibronectin type-III domains span residues 27–127 (PPEK…IVEP) and 129–229 (PPVN…IPND). A disulfide bridge links cysteine 36 with cysteine 46. The N-linked (GlcNAc...) asparagine glycan is linked to asparagine 59. A disulfide bond links cysteine 75 and cysteine 86. N-linked (GlcNAc...) asparagine glycosylation is present at asparagine 132. Zn(2+) is bound by residues aspartate 211 and histidine 212. A WSXWS motif motif is present at residues 215–219 (WSEWS). Residues 238–258 (WIFVGVLSAVICLIMVWAVAL) form a helical membrane-spanning segment. The Cytoplasmic segment spans residues 259–581 (KGYSMVTCIL…SAKKAPPALP (323 aa)). The Box 1 motif signature appears at 267-275 (ILPPVPGPK). 2 stretches are compositionally biased toward basic and acidic residues: residues 323 to 349 (QHLM…DTDS) and 375 to 388 (HIPE…DPET). Disordered regions lie at residues 323–388 (QHLM…DPET) and 462–492 (FKPS…PDQD).

Belongs to the type I cytokine receptor family. Type 1 subfamily. Interacts with SMARCA1. Interacts with NEK3 and VAV2 and this interaction is prolactin-dependent. Expressed in all tissues examined; liver, pituitary, adrenal gland, ovary and fetal liver.

Its subcellular location is the membrane. In terms of biological role, this is a receptor for the anterior pituitary hormone prolactin. The polypeptide is Prolactin receptor (PRLR) (Ovis aries (Sheep)).